The following is a 312-amino-acid chain: Nucleosome assembly protein 1-like 4 (312 aa).

Residues 24–78 (VETLKNKLQALAEQHVDVLESLAPSVRKRVDVLMEIQSQHDELEVKFFEEKAALE) adopt a coiled-coil conformation. The Nuclear export signal motif lies at 45-60 (LAPSVRKRVDVLMEIQ). Residues 288 to 312 (EDYGASWVDDEEEDDNDDEYSDEEA) form a disordered region.

The protein belongs to the nucleosome assembly protein (NAP) family.

The protein resides in the nucleus. Its subcellular location is the cytoplasm. In terms of biological role, may modulate chromatin structure by regulation of nucleosome assembly/disassembly. In Oryza sativa subsp. indica (Rice), this protein is Nucleosome assembly protein 1-like 4.